Consider the following 498-residue polypeptide: DELTA-thalatoxin-Avl2a (498 aa).

An N-terminal signal peptide occupies residues 1–22; the sequence is MSPYFKLSSALIFLAITMEALC. A propeptide spanning residues 23 to 35 is cleaved from the precursor; it reads SPIENTSTSNKDN. In terms of domain architecture, MACPF spans 23–359; it reads SPIENTSTSN…GFLHFGCSFL (337 aa). Residues 135–159 are a coiled coil; that stretch reads AAVTNNIASSEEEVQGLSLNLKAYS. Disulfide bonds link cysteine 389-cysteine 402, cysteine 396-cysteine 410, and cysteine 412-cysteine 422. Residues 410–422 enclose the EGF-like domain; the sequence is CECGGPYDLARTC.

The protein localises to the secreted. The protein resides in the nematocyst. Is lethal to mice, and may cause hemolytic activity. In Actineria villosa (Okinawan sea anemone), this protein is DELTA-thalatoxin-Avl2a.